A 101-amino-acid polypeptide reads, in one-letter code: Urease subunit beta (101 aa).

This sequence belongs to the urease beta subunit family. Heterotrimer of UreA (gamma), UreB (beta) and UreC (alpha) subunits. Three heterotrimers associate to form the active enzyme.

The protein resides in the cytoplasm. The catalysed reaction is urea + 2 H2O + H(+) = hydrogencarbonate + 2 NH4(+). It participates in nitrogen metabolism; urea degradation; CO(2) and NH(3) from urea (urease route): step 1/1. This chain is Urease subunit beta, found in Stutzerimonas stutzeri (strain A1501) (Pseudomonas stutzeri).